The primary structure comprises 427 residues: 3-phosphoshikimate 1-carboxyvinyltransferase (427 aa).

3-phosphoshikimate contacts are provided by Lys-20, Ser-21, and Arg-25. Lys-20 is a phosphoenolpyruvate binding site. Phosphoenolpyruvate contacts are provided by Gly-92 and Arg-120. Residues Ser-166, Gln-168, Asp-312, and Lys-339 each contribute to the 3-phosphoshikimate site. Gln-168 provides a ligand contact to phosphoenolpyruvate. Asp-312 functions as the Proton acceptor in the catalytic mechanism. Phosphoenolpyruvate contacts are provided by Arg-343 and Arg-385.

The protein belongs to the EPSP synthase family. Monomer.

The protein localises to the cytoplasm. It carries out the reaction 3-phosphoshikimate + phosphoenolpyruvate = 5-O-(1-carboxyvinyl)-3-phosphoshikimate + phosphate. The protein operates within metabolic intermediate biosynthesis; chorismate biosynthesis; chorismate from D-erythrose 4-phosphate and phosphoenolpyruvate: step 6/7. Functionally, catalyzes the transfer of the enolpyruvyl moiety of phosphoenolpyruvate (PEP) to the 5-hydroxyl of shikimate-3-phosphate (S3P) to produce enolpyruvyl shikimate-3-phosphate and inorganic phosphate. In Streptococcus pyogenes serotype M4 (strain MGAS10750), this protein is 3-phosphoshikimate 1-carboxyvinyltransferase.